A 599-amino-acid chain; its full sequence is Elongation factor 4 (599 aa).

The tr-type G domain maps to 5 to 187 (SHIRNFSIIA…ALVNGIPAPV (183 aa)). GTP is bound by residues 17–22 (DHGKST) and 134–137 (NKMD).

Belongs to the TRAFAC class translation factor GTPase superfamily. Classic translation factor GTPase family. LepA subfamily.

The protein localises to the cell inner membrane. The catalysed reaction is GTP + H2O = GDP + phosphate + H(+). Required for accurate and efficient protein synthesis under certain stress conditions. May act as a fidelity factor of the translation reaction, by catalyzing a one-codon backward translocation of tRNAs on improperly translocated ribosomes. Back-translocation proceeds from a post-translocation (POST) complex to a pre-translocation (PRE) complex, thus giving elongation factor G a second chance to translocate the tRNAs correctly. Binds to ribosomes in a GTP-dependent manner. This chain is Elongation factor 4, found in Teredinibacter turnerae (strain ATCC 39867 / T7901).